Reading from the N-terminus, the 246-residue chain is Acetoacetate decarboxylase (246 aa).

Lys-116 serves as the catalytic Schiff-base intermediate with acetoacetate.

It belongs to the ADC family.

It carries out the reaction acetoacetate + H(+) = acetone + CO2. Its function is as follows. Catalyzes the conversion of acetoacetate to acetone and carbon dioxide. The polypeptide is Acetoacetate decarboxylase (Burkholderia multivorans (strain ATCC 17616 / 249)).